Reading from the N-terminus, the 201-residue chain is Retinol binding protein 4 (201 aa).

Positions 1–18 (MAWVWALVLLAALGSARA) are cleaved as a signal peptide. Intrachain disulfides connect C22-C178, C88-C192, and C138-C147. Residue Q116 participates in substrate binding. R139 is modified (omega-N-methylarginine).

This sequence belongs to the calycin superfamily. Lipocalin family. In terms of assembly, interacts with TTR. Interaction with TTR prevents its loss by filtration through the kidney glomeruli. Interacts with STRA6. As to expression, highly expressed in liver. Also expressed in adipose tissue. Expressed by endometrium from days 16-25 and by unattached chorioallantois from days 30-36 during pregnancy.

The protein resides in the secreted. Retinol-binding protein that mediates retinol transport in blood plasma. Delivers retinol from the liver stores to the peripheral tissues. Transfers the bound all-trans retinol to STRA6, that then facilitates retinol transport across the cell membrane. The sequence is that of Retinol binding protein 4 from Felis catus (Cat).